Here is a 370-residue protein sequence, read N- to C-terminus: tRNA (guanine(26)-N(2))-dimethyltransferase (370 aa).

The Trm1 methyltransferase domain maps to 4–368; the sequence is TWVTEGRTTI…APLEEIRDCI (365 aa). Residues Arg41, Arg66, Asp82, Asp108, and Ala109 each contribute to the S-adenosyl-L-methionine site. Zn(2+) is bound by residues Cys237, Cys240, Cys256, and Cys259.

It belongs to the class I-like SAM-binding methyltransferase superfamily. Trm1 family.

The enzyme catalyses guanosine(26) in tRNA + 2 S-adenosyl-L-methionine = N(2)-dimethylguanosine(26) in tRNA + 2 S-adenosyl-L-homocysteine + 2 H(+). Its function is as follows. Dimethylates a single guanine residue at position 26 of a number of tRNAs using S-adenosyl-L-methionine as donor of the methyl groups. This chain is tRNA (guanine(26)-N(2))-dimethyltransferase, found in Methanospirillum hungatei JF-1 (strain ATCC 27890 / DSM 864 / NBRC 100397 / JF-1).